A 637-amino-acid polypeptide reads, in one-letter code: DNA primase (637 aa).

The CHC2-type zinc finger occupies 39-63; sequence CPFHGEKTPSFNVNAEKGFYHCFGC. Residues 257-338 enclose the Toprim domain; sequence HEVYLMEGFM…QIVKVPEGLD (82 aa). The Mg(2+) site is built by E263, D307, and D309.

The protein belongs to the DnaG primase family. Monomer. Interacts with DnaB. Zn(2+) serves as cofactor. Mg(2+) is required as a cofactor.

The catalysed reaction is ssDNA + n NTP = ssDNA/pppN(pN)n-1 hybrid + (n-1) diphosphate.. In terms of biological role, RNA polymerase that catalyzes the synthesis of short RNA molecules used as primers for DNA polymerase during DNA replication. This Lactococcus lactis subsp. lactis (strain IL1403) (Streptococcus lactis) protein is DNA primase.